The sequence spans 547 residues: MTAKDIIFDSDARAKLKVGVDKLANAVKVTLGPAGRNVLIDKKFGAPTSTKDGVTVAKEIELADAVENMGAQMVREVASKTSDVAGDGTTTATVLAQAIYREGLKNVAAGARPIDLKRGIDRAVKEVVAELRNISRSISGKKEIAQVGTISANNDPEIGELIAEAMDKVGKDGVITVEEAKGMDTELKVVEGMQFDRGYLSPYFVTNPETMEAEIEDPLILIHDKKIGNMKELLPILEKSAQSGRPLLIIAEDIEGEALATLVVNKLRGTLKVCAVKAPGFGDRRKAMLEDIAILTGGTVISEEKGYKLENATLAYLGQAGRVNIDKDNTTIVEGKGTQEDIKARINEIKGQIDKSTSDYDTEKLQERLAKLSGGVAVLNIGASTEVEMKEKKARVEDALHATRAAVQEGIVVGGGVALIRAIKGLANAVADNEDQKTGIEIIRRALEEPLRQIVANTGTTDGAVVLEKVKAAEGDFGFNARTEQYENLVEAGVVDPTKVTRSALENAASVASILLTTEAAITDIKEEKSDMPAMPPGGMGGMGGMY.

Residues 30-33 (TLGP), lysine 51, 87-91 (DGTTT), glycine 415, and aspartate 496 each bind ATP.

It belongs to the chaperonin (HSP60) family. In terms of assembly, forms a cylinder of 14 subunits composed of two heptameric rings stacked back-to-back. Interacts with the co-chaperonin GroES.

It is found in the cytoplasm. It carries out the reaction ATP + H2O + a folded polypeptide = ADP + phosphate + an unfolded polypeptide.. Functionally, together with its co-chaperonin GroES, plays an essential role in assisting protein folding. The GroEL-GroES system forms a nano-cage that allows encapsulation of the non-native substrate proteins and provides a physical environment optimized to promote and accelerate protein folding. The sequence is that of Chaperonin GroEL from Chlorobium limicola (strain DSM 245 / NBRC 103803 / 6330).